We begin with the raw amino-acid sequence, 102 residues long: Small ribosomal subunit protein uS10 (102 aa).

This sequence belongs to the universal ribosomal protein uS10 family. Part of the 30S ribosomal subunit.

In terms of biological role, involved in the binding of tRNA to the ribosomes. The chain is Small ribosomal subunit protein uS10 from Methylobacterium nodulans (strain LMG 21967 / CNCM I-2342 / ORS 2060).